Reading from the N-terminus, the 325-residue chain is GTP 3',8-cyclase (325 aa).

One can recognise a Radical SAM core domain in the interval 4-219; the sequence is TYQREINYLR…DAISAKLGPL (216 aa). Arg13 is a binding site for GTP. The [4Fe-4S] cluster site is built by Cys20 and Cys24. Tyr26 lines the S-adenosyl-L-methionine pocket. Cys27 is a [4Fe-4S] cluster binding site. Arg63 serves as a coordination point for GTP. An S-adenosyl-L-methionine-binding site is contributed by Gly67. Residue Thr94 participates in GTP binding. Ser118 contributes to the S-adenosyl-L-methionine binding site. Lys155 provides a ligand contact to GTP. Met189 is an S-adenosyl-L-methionine binding site. [4Fe-4S] cluster-binding residues include Cys254 and Cys257. 259 to 261 lines the GTP pocket; it reads RLR. A [4Fe-4S] cluster-binding site is contributed by Cys271.

The protein belongs to the radical SAM superfamily. MoaA family. As to quaternary structure, monomer and homodimer. Requires [4Fe-4S] cluster as cofactor.

It carries out the reaction GTP + AH2 + S-adenosyl-L-methionine = (8S)-3',8-cyclo-7,8-dihydroguanosine 5'-triphosphate + 5'-deoxyadenosine + L-methionine + A + H(+). It functions in the pathway cofactor biosynthesis; molybdopterin biosynthesis. Functionally, catalyzes the cyclization of GTP to (8S)-3',8-cyclo-7,8-dihydroguanosine 5'-triphosphate. The sequence is that of GTP 3',8-cyclase from Pelotomaculum thermopropionicum (strain DSM 13744 / JCM 10971 / SI).